A 393-amino-acid polypeptide reads, in one-letter code: NAD(P)H-quinone oxidoreductase subunit H, chloroplastic (393 aa).

Belongs to the complex I 49 kDa subunit family. As to quaternary structure, NDH is composed of at least 16 different subunits, 5 of which are encoded in the nucleus.

Its subcellular location is the plastid. It is found in the chloroplast thylakoid membrane. It catalyses the reaction a plastoquinone + NADH + (n+1) H(+)(in) = a plastoquinol + NAD(+) + n H(+)(out). It carries out the reaction a plastoquinone + NADPH + (n+1) H(+)(in) = a plastoquinol + NADP(+) + n H(+)(out). NDH shuttles electrons from NAD(P)H:plastoquinone, via FMN and iron-sulfur (Fe-S) centers, to quinones in the photosynthetic chain and possibly in a chloroplast respiratory chain. The immediate electron acceptor for the enzyme in this species is believed to be plastoquinone. Couples the redox reaction to proton translocation, and thus conserves the redox energy in a proton gradient. In Anthoceros angustus (Hornwort), this protein is NAD(P)H-quinone oxidoreductase subunit H, chloroplastic.